The sequence spans 256 residues: Adenylate kinase (256 aa).

Residue 49-54 (GAGKGT) coordinates ATP. The tract at residues 69–98 (ATGDMLRDQVEKKTPLGIAAKKIMDAGGLV) is NMP. AMP is bound by residues Thr70, Arg75, 96-98 (GLV), 125-128 (GFPR), and Gln132. Residues 166 to 203 (GRLIHPASGRSYHKIFNPPKKAGIDDLTGEPLIQRSDD) are LID. ATP contacts are provided by residues Arg167 and 176-177 (SY). Residues Arg200 and Arg211 each contribute to the AMP site. Gln239 contributes to the ATP binding site.

The protein belongs to the adenylate kinase family. AK2 subfamily. In terms of assembly, monomer.

The protein localises to the cytoplasm. The protein resides in the cytosol. It is found in the mitochondrion intermembrane space. The enzyme catalyses AMP + ATP = 2 ADP. Functionally, catalyzes the reversible transfer of the terminal phosphate group between ATP and AMP. Plays an important role in cellular energy homeostasis and in adenine nucleotide metabolism. Adenylate kinase activity is critical for regulation of the phosphate utilization and the AMP de novo biosynthesis pathways. This chain is Adenylate kinase, found in Coprinopsis cinerea (strain Okayama-7 / 130 / ATCC MYA-4618 / FGSC 9003) (Inky cap fungus).